Consider the following 2211-residue polypeptide: Activating signal cointegrator 1 complex subunit 3 (2211 aa).

Residues 495 to 678 (ETAYNTNENM…FLHVNPYIGL (184 aa)) enclose the Helicase ATP-binding 1 domain. Position 508–515 (508–515 (APTGAGKT)) interacts with ATP. Positions 620 to 623 (DEVH) match the DEVH box motif. The 207-residue stretch at 717–923 (VLKQIMAGHQ…GTVTNVEEAV (207 aa)) folds into the Helicase C-terminal 1 domain. The SEC63 1 domain occupies 987-1296 (STDLGRTASH…GAEAVCIINF (310 aa)). In terms of domain architecture, Helicase ATP-binding 2 spans 1345–1520 (HTLYHTDCNV…WLNINQMGLF (176 aa)). Residue 1358-1365 (APTGSGKT) coordinates ATP. The DEIH box signature appears at 1462 to 1465 (DEIH). Residues 1553–1760 (PAFQAIRSHS…GTITSKQDAM (208 aa)) enclose the Helicase C-terminal 2 domain. Positions 1821–2184 (PLTYGRIASY…YLGMDQQYDI (364 aa)) constitute an SEC63 2 domain.

Belongs to the helicase family.

Its subcellular location is the nucleus. The protein resides in the nucleus speckle. It is found in the cytoplasm. The protein localises to the cytosol. It carries out the reaction Couples ATP hydrolysis with the unwinding of duplex DNA by translocating in the 3'-5' direction.. The enzyme catalyses ATP + H2O = ADP + phosphate + H(+). Its function is as follows. 3'-5' DNA helicase involved in repair of alkylated DNA. Promotes DNA unwinding to generate single-stranded substrate needed for ALKBH3, enabling ALKBH3 to process alkylated N3-methylcytosine (3mC) within double-stranded regions. Also involved in activation of the ribosome quality control (RQC) pathway, a pathway that degrades nascent peptide chains during problematic translation. Drives the splitting of stalled ribosomes. This is Activating signal cointegrator 1 complex subunit 3 (ascc3) from Gallus gallus (Chicken).